Reading from the N-terminus, the 319-residue chain is D-galacturonate reductase (319 aa).

Tyrosine 58 acts as the Proton donor in catalysis. Histidine 121 lines the substrate pocket. 216 to 275 (SPLGAARTKWGDDRVLGSDIIEEIAQAKGKSTAQISLRWVYEQGVSIVTKSYNKERMRQN) serves as a coordination point for NADP(+).

This sequence belongs to the aldo/keto reductase family. In terms of tissue distribution, expressed specifically in the receptacle tissue of the fruit.

The enzyme catalyses L-galactonate + NADP(+) = aldehydo-D-galacturonate + NADPH + H(+). It functions in the pathway cofactor biosynthesis; L-ascorbate biosynthesis. In terms of biological role, involved in ascorbic acid (vitamin C) biosynthesis. The polypeptide is D-galacturonate reductase (GALUR) (Fragaria ananassa (Strawberry)).